A 483-amino-acid chain; its full sequence is ATP-dependent RNA helicase dbp-5 (483 aa).

The disordered stretch occupies residues 1-47 (MADLASRITKPDEAPAAAPEAAPVSAPASEEPKAPENETSIEESQSN). A compositionally biased stretch (low complexity) spans 14 to 29 (APAAAPEAAPVSAPAS). A Q motif motif is present at residues 74–102 (SSFDELGLPEAVNRGLLAINFKKPSKVQE). Residues 107–276 (LMLSDPPRNM…ERFAPNANQM (170 aa)) form the Helicase ATP-binding domain. Position 120-127 (120-127 (SQSGTGKT)) interacts with ATP. Residues 223–226 (DEAD) carry the DEAD box motif. The Helicase C-terminal domain occupies 304–455 (ILCKLYGLMT…LIQLNPNDLD (152 aa)).

It belongs to the DEAD box helicase family. DDX19/DBP5 subfamily. Associates with the nuclear pore complex.

The protein localises to the cytoplasm. It localises to the nucleus. It is found in the nuclear pore complex. Its subcellular location is the nucleus membrane. It carries out the reaction ATP + H2O = ADP + phosphate + H(+). Functionally, ATP-dependent RNA helicase associated with the nuclear pore complex and essential for mRNA export from the nucleus. May participate in a terminal step of mRNA export through the removal of proteins that accompany mRNA through the nucleopore complex. May also be involved in early transcription. The protein is ATP-dependent RNA helicase dbp-5 (dbp-5) of Neurospora crassa (strain ATCC 24698 / 74-OR23-1A / CBS 708.71 / DSM 1257 / FGSC 987).